Reading from the N-terminus, the 275-residue chain is Transmembrane protein 45B (275 aa).

7 helical membrane-spanning segments follow: residues 7–27, 47–67, 94–114, 116–136, 146–166, 180–200, and 212–232; these read HALP…KYPL, IVEA…EQFV, LFFA…HVPL, VDRL…YYHV, IHSL…LEVI, LIIL…PPFG, and LMFI…IVAV. Phosphoserine occurs at positions 270 and 272.

The protein belongs to the TMEM45 family. In terms of assembly, (Microbial infection) Interacts with sindbis virus nsP1 and nsP4; these interactions lead to viral RNA replication inhibition. (Microbial infection) Interacts with chikungunya virus nsP1 and nsP4; these interactions lead to viral RNA replication inhibition.

The protein localises to the endosome membrane. It is found in the lysosome membrane. Its subcellular location is the golgi apparatus. The protein resides in the trans-Golgi network membrane. Plays a role in innate immunity. Mechanistically, promotes alphaviruses RNA degradation by interacting with the viral polymerase nsP4 and the mRNA-capping enzyme nsP1 and thereby interfering with the interaction between viral RNA and nsP1. The chain is Transmembrane protein 45B (TMEM45B) from Homo sapiens (Human).